The following is a 614-amino-acid chain: Subtilin transport ATP-binding protein SpaT (614 aa).

Helical transmembrane passes span 34-54 (FLKL…SLYI), 69-89 (VSIV…SELI), 147-167 (IIQA…SIAF), 175-195 (VSLL…KIGQ), and 267-287 (IAVQ…AFAG). Residues 34-320 (FLKLIRFSII…IMTSIYSIYN (287 aa)) enclose the ABC transmembrane type-1 domain. Residues 353–593 (VVFQNVSFIY…CPLYKKMDES (241 aa)) enclose the ABC transporter domain. An ATP-binding site is contributed by 387–394 (GPNGSGKK).

This sequence belongs to the ABC transporter superfamily.

It is found in the cell membrane. Probably implicated in the export process of the lantibiotic subtilin. The chain is Subtilin transport ATP-binding protein SpaT (spaT) from Bacillus subtilis.